Consider the following 474-residue polypeptide: MDRNPSPPPPGRDKEEEEEVAGGDCIGSTVYSKHWLFGVLSGLIQIVSPENTKSSSDDEEQLTELDEEMENEICRVWDMSMDEDVALFLQEFNAPDIFMGVLAKSKCPRLREICVGILGNMACFQEICVSISSDKNLGQVLLHCLYDSDPPTLLETSRLLLTCLSQAEVASVWVERIQEHPAIYDSICFIMSSSTNVDLLVKVGEVVDKLFDLDEKLMLEWVRNGAAQPLDQPQEESEEQPVFRLVPCILEAAKQVRSENPEWLDVYMHILQLLTTVDDGIQAIVHCPDTGKDIWNLLFDLVCHEFCQSDDPPIILQEQKTVLASVFSVLSAIYASQTEQEYLKIEKVDLPLIDSLIRVLQNMEQCQKKPENSAESNTEETKRTDLTQDDFHLKILKDILCEFLSNIFQALTKETVAQGVKEGQLSKQKCSSAFQNLLPFYSPVVEDFIKILREVDKALADDLEKNFPSLKVQT.

The segment covering 1–10 (MDRNPSPPPP) has biased composition (pro residues). Positions 1–21 (MDRNPSPPPPGRDKEEEEEVA) are disordered. Phosphoserine is present on Ser6. A Phosphothreonine modification is found at Thr387.

It belongs to the SAAL1 family. As to expression, highly expressed in testis and ovary, and to a lesser extent in the lung, spleen and the heart (at protein level).

It is found in the nucleus. In terms of biological role, plays a role in promoting the proliferation of synovial fibroblasts in response to pro-inflammatory stimuli. The polypeptide is Protein SAAL1 (SAAL1) (Homo sapiens (Human)).